Here is a 181-residue protein sequence, read N- to C-terminus: ATP-dependent protease subunit HslV (181 aa).

Residue Thr5 is part of the active site. Na(+) is bound by residues Ala161, Cys164, and Thr167.

It belongs to the peptidase T1B family. HslV subfamily. In terms of assembly, a double ring-shaped homohexamer of HslV is capped on each side by a ring-shaped HslU homohexamer. The assembly of the HslU/HslV complex is dependent on binding of ATP.

It localises to the cytoplasm. It catalyses the reaction ATP-dependent cleavage of peptide bonds with broad specificity.. Allosterically activated by HslU binding. Functionally, protease subunit of a proteasome-like degradation complex believed to be a general protein degrading machinery. The protein is ATP-dependent protease subunit HslV of Sulfurimonas denitrificans (strain ATCC 33889 / DSM 1251) (Thiomicrospira denitrificans (strain ATCC 33889 / DSM 1251)).